Here is a 255-residue protein sequence, read N- to C-terminus: 5'-nucleotidase SurE (255 aa).

A divalent metal cation is bound by residues Asp-8, Asp-9, Ser-40, and Asn-92.

The protein belongs to the SurE nucleotidase family. A divalent metal cation is required as a cofactor.

The protein resides in the cytoplasm. The catalysed reaction is a ribonucleoside 5'-phosphate + H2O = a ribonucleoside + phosphate. Its function is as follows. Nucleotidase that shows phosphatase activity on nucleoside 5'-monophosphates. This Brucella suis (strain ATCC 23445 / NCTC 10510) protein is 5'-nucleotidase SurE.